A 300-amino-acid chain; its full sequence is Peroxisomal 2,4-dienoyl-CoA reductase [(3E)-enoyl-CoA-producing] (300 aa).

NADP(+) is bound by residues 42-47, 67-71, and Asp-93; these read GGGSGI and RNLEK. Arg-67 lines the substrate pocket. Substrate is bound by residues Arg-95, Phe-125, and 133-135; that span reads SFN. Residues Lys-189 and 215–221 each bind NADP(+); that span reads PGPISGT. Arg-226 serves as a coordination point for substrate. A Microbody targeting signal motif is present at residues 298 to 300; the sequence is AKL.

The protein belongs to the short-chain dehydrogenases/reductases (SDR) family. 2,4-dienoyl-CoA reductase subfamily. Monomer, dimer and oligomer.

The protein resides in the peroxisome. The catalysed reaction is a (2E,4Z)-dienoyl-CoA + NADPH + H(+) = a 4,5-saturated-(3E)-enoyl-CoA + NADP(+). The enzyme catalyses a (2E,4E)-dienoyl-CoA + NADPH + H(+) = a 4,5-saturated-(3E)-enoyl-CoA + NADP(+). It catalyses the reaction (2E,4E)-hexadienoyl-CoA + NADPH + H(+) = (3E)-hexenoyl-CoA + NADP(+). It carries out the reaction (2E,4E)-decadienoyl-CoA + NADPH + H(+) = (3E)-decenoyl-CoA + NADP(+). The catalysed reaction is (2E,4Z,7Z,10Z,13Z,16Z,19Z)-docosaheptaenoyl-CoA + NADPH + H(+) = (3E,7Z,10Z,13Z,16Z,19Z)-docosahexaenoyl-CoA + NADP(+). In terms of biological role, auxiliary enzyme of beta-oxidation. Participates in the degradation of unsaturated fatty enoyl-CoA esters having double bonds in both even- and odd-numbered positions in peroxisome. Catalyzes the NADP-dependent reduction of 2,4-dienoyl-CoA to yield trans-3-enoyl-CoA. This chain is Peroxisomal 2,4-dienoyl-CoA reductase [(3E)-enoyl-CoA-producing] (decr2), found in Danio rerio (Zebrafish).